Reading from the N-terminus, the 113-residue chain is U11-theraphotoxin-Hhn1a (113 aa).

Positions 1–21 are cleaved as a signal peptide; that stretch reads MNTVRVTFLLVFVLAVSLGQA. A propeptide spanning residues 22–74 is cleaved from the precursor; that stretch reads DKDENRMEMQEKTEQGKGYLDFAENLLPQKLEELEAKLLEEDSEESRNSRQKR. Residues 59–69 show a composition bias toward basic and acidic residues; that stretch reads LLEEDSEESRN. The interval 59–83 is disordered; the sequence is LLEEDSEESRNSRQKRCIGEGVPCD. Intrachain disulfides connect Cys-75–Cys-90, Cys-82–Cys-95, and Cys-89–Cys-110.

Belongs to the neurotoxin 14 (magi-1) family. 01 (HNTX-16) subfamily. As to expression, expressed by the venom gland.

It is found in the secreted. Functionally, probable ion channel inhibitor. This Cyriopagopus hainanus (Chinese bird spider) protein is U11-theraphotoxin-Hhn1a.